We begin with the raw amino-acid sequence, 365 residues long: Phosphate acyltransferase (365 aa).

The protein belongs to the PlsX family. Homodimer. Probably interacts with PlsY.

It localises to the cytoplasm. The enzyme catalyses a fatty acyl-[ACP] + phosphate = an acyl phosphate + holo-[ACP]. Its pathway is lipid metabolism; phospholipid metabolism. Functionally, catalyzes the reversible formation of acyl-phosphate (acyl-PO(4)) from acyl-[acyl-carrier-protein] (acyl-ACP). This enzyme utilizes acyl-ACP as fatty acyl donor, but not acyl-CoA. This Klebsiella pneumoniae (strain 342) protein is Phosphate acyltransferase.